The chain runs to 234 residues: Zein-alpha A30 (234 aa).

An N-terminal signal peptide occupies residues Met1–Ala21.

The protein belongs to the zein family.

Functionally, zeins are major seed storage proteins. The protein is Zein-alpha A30 of Zea mays (Maize).